A 501-amino-acid chain; its full sequence is Zinc finger protein 704 (501 aa).

Positions 80–96 are enriched in polar residues; that stretch reads SLKSTCNGGQRDGLTQG. Disordered regions lie at residues 80–138, 183–203, and 216–267; these read SLKS…HTRS, PLVR…WKDG, and WSWS…LFDE. Residues 115–137 are compositionally biased toward basic and acidic residues; that stretch reads EEPRVLEHKRTGRALETEKDHTR. A C2H2-type zinc finger spans residues 281-306; sequence FKCLWKNCGKVLSTAAGIQRHIRTVH. Disordered regions lie at residues 340-380, 398-419, 427-446, and 453-472; these read SLSP…SRSA, PVTI…FSIS, FTGT…GEQH, and LSSP…GEGK. Low complexity predominate over residues 368-380; it reads SESSSSTPLSRSA. A CR1 motif is present at residues 472–476; that stretch reads KKCRK. Positions 490–494 match the CR2 motif; the sequence is CRWKK.

The protein resides in the nucleus. Transcription factor. This Danio rerio (Zebrafish) protein is Zinc finger protein 704 (znf704).